The primary structure comprises 519 residues: Membrane-bound lytic murein transglycosylase F (519 aa).

Positions 1–32 (MKKLKLNYLLIGVVTLLLAVALWPAIPWSGKA) are cleaved as a signal peptide. A non-LT domain region spans residues 33–269 (DNRIAAIQAR…RLEEKYLGHG (237 aa)). An LT domain region spans residues 270–519 (NDFDYVDTRS…PNTLSPVSPR (250 aa)). The active site involves Glu-314. The interval 495–519 (PFSQAGAGGKTHSALPNTLSPVSPR) is disordered. Over residues 508 to 519 (ALPNTLSPVSPR) the composition is skewed to polar residues.

The protein in the N-terminal section; belongs to the bacterial solute-binding protein 3 family. This sequence in the C-terminal section; belongs to the transglycosylase Slt family.

It localises to the cell outer membrane. It carries out the reaction Exolytic cleavage of the (1-&gt;4)-beta-glycosidic linkage between N-acetylmuramic acid (MurNAc) and N-acetylglucosamine (GlcNAc) residues in peptidoglycan, from either the reducing or the non-reducing ends of the peptidoglycan chains, with concomitant formation of a 1,6-anhydrobond in the MurNAc residue.. In terms of biological role, murein-degrading enzyme that degrades murein glycan strands and insoluble, high-molecular weight murein sacculi, with the concomitant formation of a 1,6-anhydromuramoyl product. Lytic transglycosylases (LTs) play an integral role in the metabolism of the peptidoglycan (PG) sacculus. Their lytic action creates space within the PG sacculus to allow for its expansion as well as for the insertion of various structures such as secretion systems and flagella. In Cronobacter sakazakii (strain ATCC BAA-894) (Enterobacter sakazakii), this protein is Membrane-bound lytic murein transglycosylase F.